The sequence spans 334 residues: Ephrin-B1 (334 aa).

The N-terminal stretch at 1-25 is a signal peptide; that stretch reads MARPRGGRWLLGVLLALCRLAAPLA. One can recognise an Ephrin RBD domain in the interval 26–160; it reads KSLEPVSWSA…TRSMKIVMKV (135 aa). The Extracellular segment spans residues 26–231; that stretch reads KSLEPVSWSA…FLSSKVAVFA (206 aa). Disulfide bonds link cysteine 60/cysteine 97 and cysteine 85/cysteine 149. Residue asparagine 135 is glycosylated (N-linked (GlcNAc...) asparagine). The segment at 175–218 is disordered; sequence SRPSKEADNTVKIVTQSPRHKVPTVEEPGKPGSVNQNGQETQGP. A compositionally biased stretch (polar residues) spans 207–218; the sequence is SVNQNGQETQGP. The chain crosses the membrane as a helical span at residues 232 to 252; it reads AIGAGCVIFILIIIFLVVLLI. Residues 253–334 lie on the Cytoplasmic side of the membrane; the sequence is KIRKRHRKHT…QSPANIYYKV (82 aa). The short motif at 332–334 is the PDZ-binding element; that stretch reads YKV.

This sequence belongs to the ephrin family. In terms of assembly, binds to the receptor tyrosine kinase EPHB2. Interacts with GRIP1 and GRIP2. Post-translationally, inducible phosphorylation of tyrosine residues in the cytoplasmic domain.

The protein resides in the membrane. Its function is as follows. Cell surface transmembrane ligand for Eph receptors, a family of receptor tyrosine kinases which are crucial for migration, repulsion and adhesion during neuronal, vascular and epithelial development. Binds promiscuously Eph receptors residing on adjacent cells, leading to contact-dependent bidirectional signaling into neighboring cells. The signaling pathway downstream of the receptor is referred to as forward signaling while the signaling pathway downstream of the ephrin ligand is referred to as reverse signaling. The sequence is that of Ephrin-B1 (EFNB1) from Gallus gallus (Chicken).